Reading from the N-terminus, the 425-residue chain is Bifunctional phosphoribosylaminoimidazole carboxylase/phosphoribosylaminoimidazole succinocarboxamide synthetase (425 aa).

Ala-2 is modified (N-acetylalanine). Positions 2 to 260 (ATAEVLNIGK…WVAERVELLL (259 aa)) are SAICAR synthetase domain. The residue at position 22 (Tyr-22) is a Phosphotyrosine. A Phosphoserine modification is found at Ser-27. The residue at position 36 (Lys-36) is an N6-acetyllysine. Ser-107 carries the post-translational modification Phosphoserine. Thr-238 is subject to Phosphothreonine. N6-acetyllysine is present on Lys-247. The linker stretch occupies residues 261–266 (KSESQC). Residues 267–425 (RVVVLMGSTS…ADKKIRECNL (159 aa)) form an AIR carboxylase domain region. The residue at position 274 (Ser-274) is a Phosphoserine. Position 332 (Ser-332) interacts with CO2.

The protein in the N-terminal section; belongs to the SAICAR synthetase family. This sequence in the C-terminal section; belongs to the AIR carboxylase family. Class II subfamily. As to quaternary structure, homooctamer.

The catalysed reaction is 5-amino-1-(5-phospho-D-ribosyl)imidazole-4-carboxylate + L-aspartate + ATP = (2S)-2-[5-amino-1-(5-phospho-beta-D-ribosyl)imidazole-4-carboxamido]succinate + ADP + phosphate + 2 H(+). It carries out the reaction 5-amino-1-(5-phospho-D-ribosyl)imidazole-4-carboxylate + H(+) = 5-amino-1-(5-phospho-beta-D-ribosyl)imidazole + CO2. It participates in purine metabolism; IMP biosynthesis via de novo pathway; 5-amino-1-(5-phospho-D-ribosyl)imidazole-4-carboxamide from 5-amino-1-(5-phospho-D-ribosyl)imidazole-4-carboxylate: step 1/2. The protein operates within purine metabolism; IMP biosynthesis via de novo pathway; 5-amino-1-(5-phospho-D-ribosyl)imidazole-4-carboxylate from 5-amino-1-(5-phospho-D-ribosyl)imidazole (carboxylase route): step 1/1. Its function is as follows. Bifunctional phosphoribosylaminoimidazole carboxylase and phosphoribosylaminoimidazole succinocarboxamide synthetase catalyzing two reactions of the de novo purine biosynthetic pathway. The sequence is that of Bifunctional phosphoribosylaminoimidazole carboxylase/phosphoribosylaminoimidazole succinocarboxamide synthetase from Homo sapiens (Human).